Consider the following 103-residue polypeptide: Acylphosphatase-2 (103 aa).

One can recognise an Acylphosphatase-like domain in the interval 13–103; the sequence is SVDYEVFGRV…LQYNGFSTRY (91 aa). Active-site residues include Arg28 and Asn46.

Belongs to the acylphosphatase family.

The catalysed reaction is an acyl phosphate + H2O = a carboxylate + phosphate + H(+). The protein is Acylphosphatase-2 (acyp2) of Xenopus tropicalis (Western clawed frog).